A 237-amino-acid chain; its full sequence is Uridylate kinase (237 aa).

Position 11-14 (Lys11–Gly14) interacts with ATP. Gly53 provides a ligand contact to UMP. ATP-binding residues include Gly54 and Arg58. UMP contacts are provided by residues Asp73 and Thr134–Thr141. ATP is bound by residues Thr161, Tyr167, and Asp170.

Belongs to the UMP kinase family. In terms of assembly, homohexamer.

Its subcellular location is the cytoplasm. The catalysed reaction is UMP + ATP = UDP + ADP. Its pathway is pyrimidine metabolism; CTP biosynthesis via de novo pathway; UDP from UMP (UMPK route): step 1/1. Its activity is regulated as follows. Inhibited by UTP. Functionally, catalyzes the reversible phosphorylation of UMP to UDP. This is Uridylate kinase from Burkholderia thailandensis (strain ATCC 700388 / DSM 13276 / CCUG 48851 / CIP 106301 / E264).